The chain runs to 279 residues: MKHLKRNMALLSVAALSFILTACSTAPITSHSTGIWDGVIVYNFSRFIIYLSKLFGGNYGWGIIVFTIIIRIIILPLMIYQTRTTMKTAELQPKLKQLQQKYSSRDAESQQKLREEQQKLYAEAGVNPMAGCLPLIIQLPVMYALYAAVSRTQVLKEGTFLWLQLSDKDPYFILPILAALFTFMSTWLSMKSQPAGSQNGMTSAMTFGMPLVILITALNFPAAITLYWVVTNLFQVGQTLIIQNPFKIQKEREEKIQTEKAKRKAIEKAKRRAMKSKRK.

An N-terminal signal peptide occupies residues 1–22 (MKHLKRNMALLSVAALSFILTA). C23 carries the N-palmitoyl cysteine lipid modification. C23 is lipidated: S-diacylglycerol cysteine. The next 5 membrane-spanning stretches (helical) occupy residues 35–55 (IWDGVIVYNFSRFIIYLSKLF), 59–79 (YGWGIIVFTIIIRIIILPLMI), 129–149 (MAGCLPLIIQLPVMYALYAAV), 170–190 (PYFILPILAALFTFMSTWLSM), and 210–230 (PLVILITALNFPAAITLYWVV). Basic and acidic residues predominate over residues 253 to 268 (EEKIQTEKAKRKAIEK). The disordered stretch occupies residues 253–279 (EEKIQTEKAKRKAIEKAKRRAMKSKRK). Positions 269 to 279 (AKRRAMKSKRK) are enriched in basic residues.

It belongs to the OXA1/ALB3/YidC family. Type 2 subfamily.

The protein localises to the cell membrane. In terms of biological role, required for the insertion and/or proper folding and/or complex formation of integral membrane proteins into the membrane. Involved in integration of membrane proteins that insert both dependently and independently of the Sec translocase complex, as well as at least some lipoproteins. This is Membrane protein insertase YidC from Pediococcus pentosaceus (strain ATCC 25745 / CCUG 21536 / LMG 10740 / 183-1w).